Reading from the N-terminus, the 480-residue chain is Glutamate--tRNA ligase (480 aa).

Residues 21-31 carry the 'HIGH' region motif; that stretch reads PSPTGYLHVGG. Basic and acidic residues predominate over residues 122–146; the sequence is NTQEQNKQKPRYDRHCLGDHKHSPE. The segment at 122 to 149 is disordered; sequence NTQEQNKQKPRYDRHCLGDHKHSPEQPH. The 'KMSKS' region signature appears at 248-252; the sequence is KLSKR. Residue Lys-251 participates in ATP binding.

The protein belongs to the class-I aminoacyl-tRNA synthetase family. Glutamate--tRNA ligase type 1 subfamily. In terms of assembly, monomer.

It is found in the cytoplasm. It carries out the reaction tRNA(Glu) + L-glutamate + ATP = L-glutamyl-tRNA(Glu) + AMP + diphosphate. In terms of biological role, catalyzes the attachment of glutamate to tRNA(Glu) in a two-step reaction: glutamate is first activated by ATP to form Glu-AMP and then transferred to the acceptor end of tRNA(Glu). This chain is Glutamate--tRNA ligase, found in Pasteurella multocida (strain Pm70).